Here is a 123-residue protein sequence, read N- to C-terminus: Cliotide T4 (123 aa).

The signal sequence occupies residues 1 to 28; that stretch reads MASLRIAPLALFFFLAASVMFTVEKTEA. Positions 29–58 form a cross-link, cyclopeptide (Gly-Asn); sequence GIPCGESCVFIPCITAAIGCSCKSKVCYRN. Intrachain disulfides connect Cys-32/Cys-48, Cys-36/Cys-50, and Cys-41/Cys-55. Positions 59 to 123 are cleaved as a propeptide — removed in mature form; the sequence is HVIAAEAKTM…KDHLKMSITN (65 aa).

Post-translationally, contains 3 disulfide bonds. In terms of processing, this is a cyclic peptide. In terms of tissue distribution, expressed in flower, stem, shoot, root, leaf, seed, pod and nodule (at protein level).

Functionally, probably participates in a plant defense mechanism. Active against Gram-negative bacteria E.coli ATCC 700926 (MIC=1.0 uM), K.pneumoniae ATTC 13883 (MIC=5.5 uM) and P.aeruginosa ATCC 39018 (MIC=7.5 uM). Has hemolytic and cytotoxic activity. The polypeptide is Cliotide T4 (Clitoria ternatea (Butterfly pea)).